A 78-amino-acid chain; its full sequence is Large ribosomal subunit protein bL28 (78 aa).

The protein belongs to the bacterial ribosomal protein bL28 family.

The protein is Large ribosomal subunit protein bL28 of Salmonella choleraesuis (strain SC-B67).